Consider the following 274-residue polypeptide: MSVNDNINHNKKLLEKYVIEDDLYNFTQLINEVSCDDEFGYKLTTIATQEASINIIKYVFDTDIIKCFPKHQMLRYAVGLPSLGYFTKNKDEFHNSLELMKLLLQYDMNNNDFPISEYLYNAVKQNNFEKVKLLIDNGINSLKIISRYHFENKYIYNNHEIVKYMIDNGVDIQGFNLSYALHSCIISDNNDGVEYYFNIGANINDLDLESVVTIIKYNRIQKLFDYSYNFNKLDYLLDNEENNNYDEALNMLVELTSIKTKNVCVLLSLIMSKY.

4 ANK repeats span residues 78–112 (VGLP…NNND), 114–144 (PISE…SLKI), 146–174 (SRYH…DIQG), and 176–205 (NLSY…NIND).

In Acanthamoeba polyphaga mimivirus (APMV), this protein is Putative ankyrin repeat protein R597.